The sequence spans 148 residues: UPF0260 protein KPK_1978 (148 aa).

This sequence belongs to the UPF0260 family.

In Klebsiella pneumoniae (strain 342), this protein is UPF0260 protein KPK_1978.